The following is a 354-amino-acid chain: uncharacterized protein (354 aa).

Disordered regions lie at residues methionine 1 to arginine 74 and serine 87 to serine 115. Lysine 19 carries the N6-acetyllysine modification. Positions glutamate 32–histidine 41 are enriched in low complexity. A compositionally biased stretch (acidic residues) spans glutamate 45 to methionine 54. Serine 115 and serine 174 each carry phosphoserine. Residues glutamine 182–glutamate 199 show a composition bias toward polar residues. 2 disordered regions span residues glutamine 182–arginine 208 and glutamine 235–serine 298. Residue tyrosine 291 is modified to Phosphotyrosine. Serine 292 bears the Phosphoserine mark.

This is an uncharacterized protein from Mus musculus (Mouse).